Reading from the N-terminus, the 441-residue chain is Pre-mRNA-splicing factor PRP46 (441 aa).

Disordered regions lie at residues 1 to 22 (MPVAKDLFPEYGTLATGENEPS) and 81 to 107 (MGASSSALTKHTPSASQPTTHDSLTNL). The segment covering 83 to 107 (ASSSALTKHTPSASQPTTHDSLTNL) has biased composition (polar residues). WD repeat units lie at residues 130-169 (GHQGWVRSVCVEPENQWFATGSADKTIKIWDLATGKLRLT), 172-211 (GHIMGVRALGVSPRHPYMFSGGEDKMVKCWDLETNKVVRH), 214-253 (GHLSAVYSLDIHPTLDVLVSAGRDAVARVWDIRTRDPVVV), 256-295 (GHKSTINRVKFQASEPQVITASADETVRLWNLQAGKTMTT), 298-336 (HHKKSVRGLTLHPEEFTFSTASANSSKQWKCPEGDLVLN), 339-379 (DQNA…QSTQ), and 388-427 (ESENGIFDSSFDKTGLRLITCEADKSIKMWREKPNATAES).

This sequence belongs to the WD repeat PRL1/PRL2 family. As to quaternary structure, associated with the spliceosome.

The protein localises to the cytoplasm. The protein resides in the nucleus. Its function is as follows. Involved in pre-mRNA splicing and required for cell cycle progression at G2/M. The protein is Pre-mRNA-splicing factor PRP46 (PRP46) of Yarrowia lipolytica (strain CLIB 122 / E 150) (Yeast).